A 227-amino-acid chain; its full sequence is Chalcone--flavanone isomerase (227 aa).

Thr-50, Asn-115, and Ser-192 together coordinate substrate.

It belongs to the chalcone isomerase family. As to expression, fibers.

The catalysed reaction is a chalcone = a flavanone.. It functions in the pathway secondary metabolite biosynthesis; flavonoid biosynthesis. Functionally, catalyzes the intramolecular cyclization of bicyclic chalcones into tricyclic (S)-flavanones. Responsible for the isomerization of 4,2',4',6'-tetrahydroxychalcone (also termed chalcone) into naringenin. The polypeptide is Chalcone--flavanone isomerase (CHI) (Gossypium hirsutum (Upland cotton)).